A 138-amino-acid chain; its full sequence is FUN14 domain-containing protein fndc-1 (138 aa).

2 helical membrane-spanning segments follow: residues P37–T56 and L61–H78. Residues N85 and N111 are each glycosylated (N-linked (GlcNAc...) asparagine).

The protein belongs to the FUN14 family. In terms of tissue distribution, broadly expressed in somatic tissues. Expressed in the hermaphrodite spermatheca and male gonad. Expressed in spermatids, but not expressed in oocytes.

The protein resides in the mitochondrion outer membrane. In terms of biological role, mitophagy receptor which plays a role in paternal mitochondria degradation in embryos after the two-cell stage. The protein is FUN14 domain-containing protein fndc-1 of Caenorhabditis elegans.